Here is a 25-residue protein sequence, read N- to C-terminus: EQATLIDFGKLNADIVPDKNGGMTQ.

In terms of assembly, the flagellum consists of an outer layer composed of repeating units of FlaA around a core that contains several antigenically related polypeptides.

The protein resides in the periplasmic flagellum. It localises to the periplasm. Component of the outer layer of the flagella. This is Flagellar filament outer layer protein (flaA) from Treponema phagedenis.